Consider the following 148-residue polypeptide: Succinate dehydrogenase assembly factor 3, mitochondrial (148 aa).

The N-terminal 12 residues, 1–12 (MYALRPTLRRSA), are a transit peptide targeting the mitochondrion. Residues 129–148 (RGTEGDLEDGDGGESGQKSQ) are disordered.

The protein belongs to the complex I LYR family. SDHAF3 subfamily. In terms of assembly, interacts with the iron-sulfur protein subunit within the SDH catalytic dimer.

It localises to the mitochondrion matrix. Plays an essential role in the assembly of succinate dehydrogenase (SDH), an enzyme complex (also referred to as respiratory complex II) that is a component of both the tricarboxylic acid (TCA) cycle and the mitochondrial electron transport chain, and which couples the oxidation of succinate to fumarate with the reduction of ubiquinone (coenzyme Q) to ubiquinol. Promotes maturation of the iron-sulfur protein subunit of the SDH catalytic dimer, protecting it from the deleterious effects of oxidants. May act together with SDHAF1. The polypeptide is Succinate dehydrogenase assembly factor 3, mitochondrial (Neurospora crassa (strain ATCC 24698 / 74-OR23-1A / CBS 708.71 / DSM 1257 / FGSC 987)).